The sequence spans 1408 residues: ABC multidrug transporter MDR1 (1408 aa).

Residues I79–N88 are compositionally biased toward polar residues. Residues I79–S102 are disordered. 2 helical membrane-spanning segments follow: residues F147–G167 and L223–W243. One can recognise an ABC transmembrane type-1 1 domain in the interval V157–K464. Residue N244 is glycosylated (N-linked (GlcNAc...) asparagine). A run of 4 helical transmembrane segments spans residues K296–V316, L321–T341, I408–V428, and G436–A456. In terms of domain architecture, ABC transporter 1 spans I499–N744. G534 to S541 contributes to the ATP binding site. N606 carries an N-linked (GlcNAc...) asparagine glycan. 2 consecutive transmembrane segments (helical) span residues I838 to F858 and L882 to F902. In terms of domain architecture, ABC transmembrane type-1 2 spans I838–K1125. N934 carries an N-linked (GlcNAc...) asparagine glycan. Helical transmembrane passes span G952–C972, L981–I999, G1072–A1092, and F1099–F1119. N-linked (GlcNAc...) asparagine glycans are attached at residues N1127 and N1182. The region spanning V1162–M1402 is the ABC transporter 2 domain. G1197–S1204 contributes to the ATP binding site. N1404 carries an N-linked (GlcNAc...) asparagine glycan.

The protein belongs to the ABC transporter superfamily. ABCB family. Multidrug resistance exporter (TC 3.A.1.201) subfamily.

Its subcellular location is the cell membrane. The catalysed reaction is itraconazole(in) + ATP + H2O = itraconazole(out) + ADP + phosphate + H(+). It carries out the reaction voriconazole(in) + ATP + H2O = voriconazole(out) + ADP + phosphate + H(+). It catalyses the reaction fluconazole(in) + ATP + H2O = fluconazole(out) + ADP + phosphate + H(+). Functionally, pleiotropic ABC efflux transporter that confers resistance to structurally and functionally unrelated compounds including azoles such as fluconazole (FLC), itraconazole (ITC), posaconazole (POS), and voriconazole (VRC). In Cryptococcus neoformans var. grubii serotype A (strain H99 / ATCC 208821 / CBS 10515 / FGSC 9487) (Filobasidiella neoformans var. grubii), this protein is ABC multidrug transporter MDR1.